Consider the following 1333-residue polypeptide: DNA-directed RNA polymerase subunit beta' (1333 aa).

Zn(2+)-binding residues include C60, C62, C75, and C78. 3 residues coordinate Mg(2+): D535, D537, and D539. 4 residues coordinate Zn(2+): C901, C983, C990, and C993.

It belongs to the RNA polymerase beta' chain family. The RNAP catalytic core consists of 2 alpha, 1 beta, 1 beta' and 1 omega subunit. When a sigma factor is associated with the core the holoenzyme is formed, which can initiate transcription. Mg(2+) serves as cofactor. The cofactor is Zn(2+).

The catalysed reaction is RNA(n) + a ribonucleoside 5'-triphosphate = RNA(n+1) + diphosphate. Its function is as follows. DNA-dependent RNA polymerase catalyzes the transcription of DNA into RNA using the four ribonucleoside triphosphates as substrates. The chain is DNA-directed RNA polymerase subunit beta' from Corynebacterium efficiens (strain DSM 44549 / YS-314 / AJ 12310 / JCM 11189 / NBRC 100395).